The chain runs to 278 residues: S-formylglutathione hydrolase YeiG (278 aa).

Residues S145, D223, and H256 each act as charge relay system in the active site.

This sequence belongs to the esterase D family.

The enzyme catalyses S-formylglutathione + H2O = formate + glutathione + H(+). Its function is as follows. Serine hydrolase involved in the detoxification of formaldehyde. Hydrolyzes S-formylglutathione to glutathione and formate. This chain is S-formylglutathione hydrolase YeiG (yeiG), found in Escherichia coli O157:H7.